Here is a 337-residue protein sequence, read N- to C-terminus: Ribosomal RNA small subunit methyltransferase H (337 aa).

Residues Gly-36 to His-38, Asp-56, Phe-82, Asp-100, and Gln-107 contribute to the S-adenosyl-L-methionine site. The segment at Leu-315–Gln-337 is disordered.

Belongs to the methyltransferase superfamily. RsmH family.

It localises to the cytoplasm. The enzyme catalyses cytidine(1402) in 16S rRNA + S-adenosyl-L-methionine = N(4)-methylcytidine(1402) in 16S rRNA + S-adenosyl-L-homocysteine + H(+). In terms of biological role, specifically methylates the N4 position of cytidine in position 1402 (C1402) of 16S rRNA. The polypeptide is Ribosomal RNA small subunit methyltransferase H (Xanthomonas euvesicatoria pv. vesicatoria (strain 85-10) (Xanthomonas campestris pv. vesicatoria)).